The chain runs to 292 residues: 2-(5''-triphosphoribosyl)-3'-dephosphocoenzyme-A synthase (292 aa).

This sequence belongs to the CitG/MdcB family.

It catalyses the reaction 3'-dephospho-CoA + ATP = 2'-(5''-triphospho-alpha-D-ribosyl)-3'-dephospho-CoA + adenine. In terms of biological role, catalyzes the formation of 2-(5''-triphosphoribosyl)-3'-dephosphocoenzyme-A, the precursor of the prosthetic group of the holo-acyl carrier protein (gamma chain) of citrate lyase, from ATP and dephospho-CoA. The chain is 2-(5''-triphosphoribosyl)-3'-dephosphocoenzyme-A synthase from Escherichia coli O6:K15:H31 (strain 536 / UPEC).